The primary structure comprises 264 residues: Cell division protein DivIB (264 aa).

At 1–23 the chain is on the cytoplasmic side; it reads MAVYEERIPQVKQQRPRRRGNRK. Residues 24–44 traverse the membrane as a helical segment; the sequence is LVFLLVLFFLTILIIVFIRSP. Over 45–264 the chain is Extracellular; the sequence is YSKVQEIRVT…GQEQPQQPQQ (220 aa). One can recognise a POTRA domain in the interval 46-114; that stretch reads SKVQEIRVTG…GLITLHITEQ (69 aa).

The protein belongs to the FtsQ/DivIB family. DivIB subfamily.

The protein resides in the cell membrane. Cell division protein that may be involved in stabilizing or promoting the assembly of the division complex. The sequence is that of Cell division protein DivIB from Brevibacillus brevis (strain 47 / JCM 6285 / NBRC 100599).